A 238-amino-acid chain; its full sequence is Lactate utilization protein A (238 aa).

Belongs to the LutA/YkgE family.

Its function is as follows. Is involved in L-lactate degradation and allows cells to grow with lactate as the sole carbon source. The sequence is that of Lactate utilization protein A from Bacillus velezensis (strain DSM 23117 / BGSC 10A6 / LMG 26770 / FZB42) (Bacillus amyloliquefaciens subsp. plantarum).